The following is a 737-amino-acid chain: Polyribonucleotide nucleotidyltransferase (737 aa).

2 residues coordinate Mg(2+): D489 and D495. Residues 556–615 form the KH domain; that stretch reads PKIDTIKIDVDKIKIVIGKGGETIDKIIAETGVKIDIDEEGNVSIYSSDQDAINRAKEII. Residues 625-693 form the S1 motif domain; that stretch reads DEVYRAKVVR…EKGRIDASMK (69 aa). Residues 691–737 form a disordered region; it reads SMKALLPRPPKPEHDEKGEKSERPHRPRHQKDYKPKKEFTETSKDSE. The span at 700–737 shows a compositional bias: basic and acidic residues; the sequence is PKPEHDEKGEKSERPHRPRHQKDYKPKKEFTETSKDSE.

Belongs to the polyribonucleotide nucleotidyltransferase family. Requires Mg(2+) as cofactor.

The protein localises to the cytoplasm. It carries out the reaction RNA(n+1) + phosphate = RNA(n) + a ribonucleoside 5'-diphosphate. Functionally, involved in mRNA degradation. Catalyzes the phosphorolysis of single-stranded polyribonucleotides processively in the 3'- to 5'-direction. This is Polyribonucleotide nucleotidyltransferase from Streptococcus pneumoniae serotype 4 (strain ATCC BAA-334 / TIGR4).